The sequence spans 250 residues: Testis-expressed protein 101 (250 aa).

The first 25 residues, 1-25, serve as a signal peptide directing secretion; that stretch reads MGACRIQYVLLIFLLIASRWTLVQN. Residues Asn-45, Asn-110, Asn-134, and Asn-160 are each glycosylated (N-linked (GlcNAc...) asparagine). The region spanning 141-215 is the UPAR/Ly6 domain; the sequence is CPTCVALGSC…VKETCSYQSF (75 aa). Residue Gly-224 is the site of GPI-anchor amidated glycine attachment. A propeptide spans 225–250 (removed in mature form); it reads ASQMPTSLWVLELLFPLLLLPLTHFP.

Interacts with VAMP3. Interacts with LY6K. Interacts with DPEP3; co-localized on the cell surface of spermatocytes, spermatids, and testicular spermatozoa, co-localized only in cytoplasmic droplets of caput and corpus epididymal sperm. Interacts with ADAM3; co-localized on sperm surface. Interacts with ADAM5. N-glycosylated; by high mannose and/or biantennary complex and/or certain types of hybrid oligosaccharides; possesses different oligosaccharides chains according to its subcellular localization in the testis. Post-translationally, sheds from membrane raft by ACE and released from the cell surface of epididymal sperm while it passes through the caput epididymis leading to disappearance of TEX101 on spermatozoa; is essential to produce fertile spermatozoa. In terms of tissue distribution, detected in testis and ovary. Expressed in spermatocytes, spermatids and testicular spermatozoa, but not in spermatogonia or interstitial cells. Expressed abundantly in testicular germ cells (TGCs) but mostly disappeared from epididymal spermatozoa.

The protein resides in the cell membrane. It localises to the membrane raft. The protein localises to the cytoplasmic vesicle. Its subcellular location is the secretory vesicle. It is found in the acrosome. The protein resides in the secreted. Plays a role in fertilization by controlling binding of sperm to zona pellucida and migration of spermatozoa into the oviduct probably through molecule adhesion ADAM3. May play a role in signal transduction and promote protein tyrosine phosphorylation. The protein is Testis-expressed protein 101 of Mus musculus (Mouse).